The chain runs to 452 residues: MPREIITLQCGQCGNQIGVEFWKQLCNEHNIDQEGILKNNNFLNEDRKDIFFYQADDEHFIPGALLFDLEPRVINSIQTSEYRNLYNPENMFISKEGGGAGNNWGCGYSQGHKVEEEIIDMIDREVDNSDNLEGFILSHSIAGGTGSGMGSYLLELLNDNYSKKMIQTFSVFPLLTNESSDVVVQPYNSILTLKRLILSTDSVVVIDNTSLNRIFVERLKLNNPTFQQTNTIISNVMSASTTTLRYPGSMNNDMISLISSLIINPKCHFLITSYTPITIDKHISNVQKTTVLDVMKRLLHTKNIMVSAPVRRGMYISILNIIRGETDPTQVHKGLQRIRDRKLVNFIKWNPASIQVTLAKQSPHVVSQHKVCGLMMANHTSISTLFERCVTQFDRLYKRRAFLENYKKESMFSSADGQGNFEEMESSKEITQNLIDEYKSAERDDYFTNTYI.

Residue 142–148 coordinates GTP; the sequence is AGGTGSG.

It belongs to the tubulin family.

It is found in the cytoplasm. The protein localises to the cytoskeleton. The protein resides in the microtubule organizing center. Its subcellular location is the centrosome. Tubulin is the major constituent of microtubules. The gamma chain is found at microtubule organizing centers (MTOC) such as the spindle poles or the centrosome, suggesting that it is involved in the minus-end nucleation of microtubule assembly. This Plasmodium falciparum (isolate NF54) protein is Tubulin gamma chain (G-TUB).